The sequence spans 155 residues: Ribonuclease 2B (155 aa).

The signal sequence occupies residues 1–25 (MGLKLLESRLCLLLLLGLVLTLVSC). The active-site Proton acceptor is His-38. Cystine bridges form between Cys-47/Cys-106, Cys-61/Cys-118, Cys-79/Cys-133, and Cys-86/Cys-94. 62–66 (KDLNT) provides a ligand contact to substrate. Residue Asn-114 is glycosylated (N-linked (GlcNAc...) asparagine). His-150 acts as the Proton donor in catalysis.

Belongs to the pancreatic ribonuclease family.

The enzyme catalyses an [RNA] containing cytidine + H2O = an [RNA]-3'-cytidine-3'-phosphate + a 5'-hydroxy-ribonucleotide-3'-[RNA].. It catalyses the reaction an [RNA] containing uridine + H2O = an [RNA]-3'-uridine-3'-phosphate + a 5'-hydroxy-ribonucleotide-3'-[RNA].. Functionally, this is a non-secretory ribonuclease. It is a pyrimidine specific nuclease with a slight preference for U. Cytotoxin and helminthotoxin. Possesses a wide variety of biological activities. In Mus musculus (Mouse), this protein is Ribonuclease 2B.